The primary structure comprises 463 residues: Sporulation-specific protein 22 (463 aa).

The N-terminal stretch at 1-25 (MNRITRKSCLFAIIFASLFVTHALG) is a signal peptide. LRR repeat units follow at residues 127 to 147 (SPEL…LFQL), 185 to 206 (IEII…NFNK), 207 to 233 (VQEI…TIRG), 251 to 275 (LREV…KVKS), and 302 to 325 (INNV…LMIA). Residues asparagine 256, asparagine 314, and asparagine 327 are each glycosylated (N-linked (GlcNAc...) asparagine). Asparagine 440 carries GPI-anchor amidated asparagine lipidation. Positions 441 to 463 (SANPSMQLDPLLFGTCLVAMLLF) are cleaved as a propeptide — removed in mature form.

It belongs to the SPS2 family.

The protein localises to the cell membrane. Redundant with SPS2 for the organization of the beta-glucan layer of the spore wall. This Saccharomyces cerevisiae (strain ATCC 204508 / S288c) (Baker's yeast) protein is Sporulation-specific protein 22 (SPS22).